Here is a 255-residue protein sequence, read N- to C-terminus: MKQSLRHQKIIKLVEQSGYLSTEELVAALDVSPQTIRRDLNILAELDLIRRHHGGAASPSSAENSDYVDRKQFFSLQKNNIAQEVAKLIPNGASLFIDIGTTPEAVANALLGHEKLRIVTNNLNAAHLLRQNESFDIVMAGGSLRMDGGIIGEATVNFISQFRLDFGILGISAIDADGSLLDYDYHEVQVKRAIIESSRQTLLVADHSKFTRQAIVRLGELSDVEYLFTGDVPEGIVNYLKEQKTKLVLCNGKVR.

The HTH deoR-type domain occupies Q3–S58. The H-T-H motif DNA-binding region spans L20–D39.

Functionally, repressor of the glycerol-3-phosphate regulon. The chain is Glycerol-3-phosphate regulon repressor (glpR) from Haemophilus influenzae (strain ATCC 51907 / DSM 11121 / KW20 / Rd).